The sequence spans 184 residues: Adenine phosphoribosyltransferase (184 aa).

This sequence belongs to the purine/pyrimidine phosphoribosyltransferase family. In terms of assembly, homodimer.

It is found in the cytoplasm. It catalyses the reaction AMP + diphosphate = 5-phospho-alpha-D-ribose 1-diphosphate + adenine. Its pathway is purine metabolism; AMP biosynthesis via salvage pathway; AMP from adenine: step 1/1. Functionally, catalyzes a salvage reaction resulting in the formation of AMP, that is energically less costly than de novo synthesis. This Acidovorax sp. (strain JS42) protein is Adenine phosphoribosyltransferase.